The sequence spans 254 residues: Imidazole glycerol phosphate synthase subunit HisF (254 aa).

Active-site residues include D12 and D131.

The protein belongs to the HisA/HisF family. In terms of assembly, heterodimer of HisH and HisF.

The protein localises to the cytoplasm. It catalyses the reaction 5-[(5-phospho-1-deoxy-D-ribulos-1-ylimino)methylamino]-1-(5-phospho-beta-D-ribosyl)imidazole-4-carboxamide + L-glutamine = D-erythro-1-(imidazol-4-yl)glycerol 3-phosphate + 5-amino-1-(5-phospho-beta-D-ribosyl)imidazole-4-carboxamide + L-glutamate + H(+). Its pathway is amino-acid biosynthesis; L-histidine biosynthesis; L-histidine from 5-phospho-alpha-D-ribose 1-diphosphate: step 5/9. IGPS catalyzes the conversion of PRFAR and glutamine to IGP, AICAR and glutamate. The HisF subunit catalyzes the cyclization activity that produces IGP and AICAR from PRFAR using the ammonia provided by the HisH subunit. This is Imidazole glycerol phosphate synthase subunit HisF from Janthinobacterium sp. (strain Marseille) (Minibacterium massiliensis).